The chain runs to 208 residues: Thymidylate kinase (208 aa).

10 to 17 (GIDGSGKT) contacts ATP.

The protein belongs to the thymidylate kinase family.

The catalysed reaction is dTMP + ATP = dTDP + ADP. Its function is as follows. Phosphorylation of dTMP to form dTDP in both de novo and salvage pathways of dTTP synthesis. This chain is Thymidylate kinase, found in Ligilactobacillus salivarius (strain UCC118) (Lactobacillus salivarius).